The following is a 177-amino-acid chain: ATP synthase subunit delta (177 aa).

Belongs to the ATPase delta chain family. As to quaternary structure, F-type ATPases have 2 components, F(1) - the catalytic core - and F(0) - the membrane proton channel. F(1) has five subunits: alpha(3), beta(3), gamma(1), delta(1), epsilon(1). F(0) has three main subunits: a(1), b(2) and c(10-14). The alpha and beta chains form an alternating ring which encloses part of the gamma chain. F(1) is attached to F(0) by a central stalk formed by the gamma and epsilon chains, while a peripheral stalk is formed by the delta and b chains.

It is found in the cell inner membrane. In terms of biological role, f(1)F(0) ATP synthase produces ATP from ADP in the presence of a proton or sodium gradient. F-type ATPases consist of two structural domains, F(1) containing the extramembraneous catalytic core and F(0) containing the membrane proton channel, linked together by a central stalk and a peripheral stalk. During catalysis, ATP synthesis in the catalytic domain of F(1) is coupled via a rotary mechanism of the central stalk subunits to proton translocation. Its function is as follows. This protein is part of the stalk that links CF(0) to CF(1). It either transmits conformational changes from CF(0) to CF(1) or is implicated in proton conduction. The sequence is that of ATP synthase subunit delta from Shewanella halifaxensis (strain HAW-EB4).